The chain runs to 470 residues: Uronate isomerase (470 aa).

Belongs to the metallo-dependent hydrolases superfamily. Uronate isomerase family.

The catalysed reaction is D-glucuronate = D-fructuronate. It catalyses the reaction aldehydo-D-galacturonate = keto-D-tagaturonate. It participates in carbohydrate metabolism; pentose and glucuronate interconversion. This chain is Uronate isomerase, found in Escherichia fergusonii (strain ATCC 35469 / DSM 13698 / CCUG 18766 / IAM 14443 / JCM 21226 / LMG 7866 / NBRC 102419 / NCTC 12128 / CDC 0568-73).